The chain runs to 502 residues: Probable RNA exonuclease C9B6.11c (502 aa).

A disordered region spans residues 338–379 (SELEEKNASTKTENDSNEDDKEECQSSSTSSVPESTASTPKK). A compositionally biased stretch (basic and acidic residues) spans 341–351 (EEKNASTKTEN). A compositionally biased stretch (low complexity) spans 363 to 376 (SSSTSSVPESTAST).

This sequence belongs to the CCR4/nocturin family.

The protein resides in the cytoplasm. It is found in the nucleus. The sequence is that of Probable RNA exonuclease C9B6.11c from Schizosaccharomyces pombe (strain 972 / ATCC 24843) (Fission yeast).